Here is a 117-residue protein sequence, read N- to C-terminus: Ig heavy chain V region MOPC 47A (117 aa).

In terms of domain architecture, Ig-like spans glutamate 1–valine 113.

The sequence is that of Ig heavy chain V region MOPC 47A from Mus musculus (Mouse).